The sequence spans 220 residues: Small ribosomal subunit protein uS2 (220 aa).

The tract at residues 201-220 (LPPDGDLPEPPSEFEVKFKR) is disordered.

The protein belongs to the universal ribosomal protein uS2 family.

This is Small ribosomal subunit protein uS2 from Staphylothermus marinus (strain ATCC 43588 / DSM 3639 / JCM 9404 / F1).